Reading from the N-terminus, the 190-residue chain is Copper-binding lipoprotein NosL (190 aa).

The signal sequence occupies residues M1–G23. C24 carries the N-palmitoyl cysteine lipid modification. C24 is lipidated: S-diacylglycerol cysteine. Residues M170 to H190 form a disordered region. Positions P180 to H190 are enriched in low complexity.

The protein belongs to the NosL family. In terms of assembly, monomer.

The protein resides in the cell membrane. Functionally, may act as a metallochaperone involved in nitrous oxide reductase assembly. Specifically binds Cu(+). This Stutzerimonas stutzeri (Pseudomonas stutzeri) protein is Copper-binding lipoprotein NosL.